We begin with the raw amino-acid sequence, 421 residues long: MAETVSSAARDAPSREGWTDSDSPEQEEVGDDAELLQCQLQLGTPREMENAELVAEVEAVAAGWMLDFLCLSLCRAFRDGRSEDFRRTRDSAEAIIHGLHRLTAYQLKTVYICQFLTRVASGKALDAQFEVDERITPLESALMIWNSIEKEHDKLHDEIKNLIKIQAVAVCMEIGSFKEAEEVFERIFGDPEFYTPLERKLLKIISQKDVFHSLFQHFSYSCMMEKIQSYVGDVLSEKSSTFLMKAATKVVENEKARTQASKDRPDATNTGMDTEVGLNKEKSVNGQQSTETEPLVDTVSSIRSHKNALSQLKHRRAPSDFSRNEARTGTLQCETTMERNRRTSGRNRLCVSENQPDTDDKSGRRKRQTWLWEEDRILKCGVKKYGEGNWAKILSHYKFNNRTSVMLKDRWRTMKRLKLIS.

Residues 1–30 (MAETVSSAARDAPSREGWTDSDSPEQEEVG) form a disordered region. Alanine 2 is modified (N-acetylalanine). The TRFH mediates dimerization stretch occupies residues 49–255 (ENAELVAEVE…AATKVVENEK (207 aa)). Lysine 200 participates in a covalent cross-link: Glycyl lysine isopeptide (Lys-Gly) (interchain with G-Cter in SUMO2). Serine 206 carries the phosphoserine; by ATM modification. The interaction with RLIM stretch occupies residues 252 to 365 (ENEKARTQAS…PDTDDKSGRR (114 aa)). The span at 253–266 (NEKARTQASKDRPD) shows a compositional bias: basic and acidic residues. The disordered stretch occupies residues 253–366 (NEKARTQASK…DTDDKSGRRK (114 aa)). A compositionally biased stretch (polar residues) spans 284–310 (VNGQQSTETEPLVDTVSSIRSHKNALS). The short motif at 313-367 (KHRRAPSDFSRNEARTGTLQCETTMERNRRTSGRNRLCVSENQPDTDDKSGRRKR) is the Nuclear localization signal element. Residues 362–419 (SGRRKRQTWLWEEDRILKCGVKKYGEGNWAKILSHYKFNNRTSVMLKDRWRTMKRLKL) enclose the HTH myb-type domain. Positions 390–415 (WAKILSHYKFNNRTSVMLKDRWRTMK) form a DNA-binding region, H-T-H motif.

In terms of assembly, homodimer; can contain both isoforms. Found in a complex with POT1; TINF2 and TNKS1. Interacts with ATM, TINF2, TNKS1, TNKS2, PINX1, NEK2 and MAPRE1. Component of the shelterin complex (telosome) composed of TERF1, TERF2, TINF2, TERF2IP ACD and POT1. Interacts with RLIM (via N-terminus). Interacts with FBXO4. Interaction with TINF2 protects against interaction with FBXO4 and subsequent polyubiquitination and proteasomal degradation. Interacts with GNL3L; this interaction promotes homodimerization. Interacts with TIN2. Interactions with GNL3L and TIN2 are mutually exclusive. Interacts with RTEL1. Interacts with CCDC79/TERB1. Post-translationally, phosphorylated preferentially on Ser-219 in an ATM-dependent manner in response to ionizing DNA damage. ADP-ribosylation by TNKS1 or TNKS2 diminishes its ability to bind to telomeric DNA. In terms of processing, ubiquitinated by RLIM/RNF12, leading to its degradation by the proteasome. Ubiquitinated by a SCF (SKP1-CUL1-F-box protein) ubiquitin-protein ligase complex, leading to its degradation by the proteasome.

It localises to the nucleus. Its subcellular location is the chromosome. The protein localises to the telomere. The protein resides in the cytoplasm. It is found in the cytoskeleton. It localises to the spindle. In terms of biological role, binds the telomeric double-stranded 5'-TTAGGG-3' repeat and negatively regulates telomere length. Involved in the regulation of the mitotic spindle. Component of the shelterin complex (telosome) that is involved in the regulation of telomere length and protection. Shelterin associates with arrays of double-stranded 5'-TTAGGG-3' repeats added by telomerase and protects chromosome ends; without its protective activity, telomeres are no longer hidden from the DNA damage surveillance and chromosome ends are inappropriately processed by DNA repair pathways. This chain is Telomeric repeat-binding factor 1 (Terf1), found in Mus musculus (Mouse).